The sequence spans 759 residues: Forkhead box protein M1 (759 aa).

Disordered regions lie at residues 1–54 (MRTS…AESS) and 94–165 (KGKE…QRQE). Polar residues predominate over residues 36–54 (PGQQEPTQAQASQDVAESS). Positions 141 to 151 (LGPKPGAKGVP) are enriched in low complexity. Glycyl lysine isopeptide (Lys-Gly) (interchain with G-Cter in SUMO2) cross-links involve residues Lys-200 and Lys-324. Positions 234 to 326 (ERPPYSYMAM…LTLDQVFKPL (93 aa)) form a DNA-binding region, fork-head. The segment at 328–349 (PGSPQSPEHLESQQKRPNPELR) is disordered. Phosphoserine is present on Ser-330. Residues 335 to 349 (EHLESQQKRPNPELR) show a composition bias toward basic and acidic residues. Residue Lys-355 forms a Glycyl lysine isopeptide (Lys-Gly) (interchain with G-Cter in SUMO2) linkage. Position 375 is a phosphoserine; by CHEK2 (Ser-375). Residues Lys-421 and Lys-439 each participate in a glycyl lysine isopeptide (Lys-Gly) (interchain with G-Cter in SUMO2) cross-link. Ser-521 carries the post-translational modification Phosphoserine. 3 disordered regions span residues 530–556 (LVTKRREKREVSRSRRKQHLQPPCLDE), 572–643 (MEIL…PQGA), and 681–706 (LASDPFSSSPPPHLEAKPGSPELQVP). The segment covering 531-542 (VTKRREKREVSR) has biased composition (basic and acidic residues). A compositionally biased stretch (polar residues) spans 604–613 (PVSSTPSKSV). Residue Thr-608 is modified to Phosphothreonine; by CDK1. Thr-624 carries the phosphothreonine modification. Ser-726 and Ser-735 each carry phosphoserine; by PLK1.

In terms of processing, phosphorylated in M (mitotic) phase. Phosphorylation by the checkpoint kinase CHEK2 in response to DNA damage increases the FOXM1 protein stability probably stimulating the transcription of genes involved in DNA repair. Phosphorylated by CDK1 in late S and G2 phases, creating docking sites for the POLO box domains of PLK1. Subsequently, PLK1 binds and phosphorylates FOXM1, leading to activation of transcriptional activity and subsequent enhanced expression of key mitotic regulators. Phosphorylated by GSK3B leading to ubiquitination and proteasomal degradation. In terms of tissue distribution, highly expressed in thymus and testis, but weakly in intestine and lung. Appears to be expressed only in adult organs containing proliferating/cycling cells or in response to growth factors.

Its subcellular location is the nucleus. Transcription factor regulating the expression of cell cycle genes essential for DNA replication and mitosis. Plays a role in the control of cell proliferation. Also plays a role in DNA break repair, participating in the DNA damage checkpoint response. Promotes transcription of PHB2. This Rattus norvegicus (Rat) protein is Forkhead box protein M1 (Foxm1).